The following is a 531-amino-acid chain: uncharacterized protein (531 aa).

The N-terminal stretch at 1 to 28 (MNTKGIIAKLTAGALIANLLICPANTLA) is a signal peptide. 3 consecutive SLH domains span residues 29–85 (EKKT…QINK), 86–149 (QAKP…IGDL), and 150–210 (PTQF…SKRM). The MurNAc-LAA domain maps to 335-517 (IIIDPGHGGI…AAEAIYAGIL (183 aa)).

The protein in the C-terminal section; belongs to the N-acetylmuramoyl-L-alanine amidase 3 family.

It localises to the secreted. The protein resides in the cell wall. Its subcellular location is the S-layer. This is an uncharacterized protein from Bacillus anthracis.